A 121-amino-acid chain; its full sequence is Griffithsin (121 aa).

The Jacalin-type lectin domain occupies 1–120 (SLTHRKFGGS…LDSLDIYYEQ (120 aa)).

Functionally, mixed specificity lectin with anti-HIV activity. Binds to HIV envelope glycoproteins, including exterior membrane glycoprotein gp120, and inhibits viral entry into cells. Binding to gp120 is dependent on gp120 being glycosylated, and is inhibited by mannose, glucose and N-acetylglucosamine. The sequence is that of Griffithsin from Griffithsia sp. (strain Q66D336) (Red alga).